Here is a 423-residue protein sequence, read N- to C-terminus: Probable electron transfer flavoprotein-quinone oxidoreductase YgcN (423 aa).

FAD is bound at residue 7-21 (IIIIGAGIAGTACAL).

Belongs to the ETF-QO/FixC family. It depends on FAD as a cofactor.

In terms of biological role, probably accepts electrons from YgcQ/YgcR and reduces a quinone. This is Probable electron transfer flavoprotein-quinone oxidoreductase YgcN (ygcN) from Escherichia coli (strain K12).